We begin with the raw amino-acid sequence, 139 residues long: Flagellar basal body rod protein FlgB (139 aa).

The protein belongs to the flagella basal body rod proteins family. The basal body constitutes a major portion of the flagellar organelle and consists of a number of rings mounted on a central rod. In Gram-negative bacteria, at least four rings, L, P, S and M are present, whereas Gram-positive bacteria lack the L and P rings. The rod consists of about 26 subunits of FlgG in the distal portion, and FlgB, FlgC and FlgF build up the proximal portion of the rod with about 6 subunits each. Rod assembly occurs by export via the flagellum-specific pathway of its constituent proteins and by their incorporation into the rod structure in the probable order of FlgB, FlgC, FlgF and FlgG. Another protein, FliE, also assembles onto the stable rod structure.

The protein resides in the bacterial flagellum basal body. Its function is as follows. Structural component of flagellum, the bacterial motility apparatus. Part of the rod structure of flagellar basal body. This chain is Flagellar basal body rod protein FlgB, found in Proteus mirabilis.